The primary structure comprises 340 residues: UDP-N-acetylenolpyruvoylglucosamine reductase (340 aa).

Positions I11–K181 constitute an FAD-binding PCMH-type domain. R156 is a catalytic residue. The Proton donor role is filled by S227. E323 is a catalytic residue.

It belongs to the MurB family. It depends on FAD as a cofactor.

It localises to the cytoplasm. It carries out the reaction UDP-N-acetyl-alpha-D-muramate + NADP(+) = UDP-N-acetyl-3-O-(1-carboxyvinyl)-alpha-D-glucosamine + NADPH + H(+). It participates in cell wall biogenesis; peptidoglycan biosynthesis. Its function is as follows. Cell wall formation. The sequence is that of UDP-N-acetylenolpyruvoylglucosamine reductase from Wigglesworthia glossinidia brevipalpis.